The sequence spans 299 residues: Putative S-adenosyl-L-methionine-dependent methyltransferase MAB_0027c (299 aa).

Residues Asp-126 and 155 to 156 (DL) contribute to the S-adenosyl-L-methionine site.

It belongs to the UPF0677 family.

In terms of biological role, exhibits S-adenosyl-L-methionine-dependent methyltransferase activity. The protein is Putative S-adenosyl-L-methionine-dependent methyltransferase MAB_0027c of Mycobacteroides abscessus (strain ATCC 19977 / DSM 44196 / CCUG 20993 / CIP 104536 / JCM 13569 / NCTC 13031 / TMC 1543 / L948) (Mycobacterium abscessus).